Consider the following 556-residue polypeptide: Arginine--tRNA ligase 2 (556 aa).

The 'HIGH' region signature appears at 132 to 142 (ANPTGDLHLGH).

The protein belongs to the class-I aminoacyl-tRNA synthetase family. In terms of assembly, monomer.

Its subcellular location is the cytoplasm. The catalysed reaction is tRNA(Arg) + L-arginine + ATP = L-arginyl-tRNA(Arg) + AMP + diphosphate. This chain is Arginine--tRNA ligase 2, found in Bacillus thuringiensis subsp. konkukian (strain 97-27).